We begin with the raw amino-acid sequence, 179 residues long: Shikimate kinase (179 aa).

Residue 11-16 participates in ATP binding; that stretch reads GAGKTT. Position 15 (T15) interacts with Mg(2+). Residues D33, R57, and G79 each contribute to the substrate site. R118 is a binding site for ATP. R140 lines the substrate pocket.

This sequence belongs to the shikimate kinase family. In terms of assembly, monomer. It depends on Mg(2+) as a cofactor.

It localises to the cytoplasm. It catalyses the reaction shikimate + ATP = 3-phosphoshikimate + ADP + H(+). It participates in metabolic intermediate biosynthesis; chorismate biosynthesis; chorismate from D-erythrose 4-phosphate and phosphoenolpyruvate: step 5/7. Catalyzes the specific phosphorylation of the 3-hydroxyl group of shikimic acid using ATP as a cosubstrate. The polypeptide is Shikimate kinase (Bacteroides fragilis (strain ATCC 25285 / DSM 2151 / CCUG 4856 / JCM 11019 / LMG 10263 / NCTC 9343 / Onslow / VPI 2553 / EN-2)).